The following is a 312-amino-acid chain: Protein-glutamate methylesterase/protein-glutamine glutaminase (312 aa).

Positions 5–122 (RVLSVDDSAL…REGMLAYSEM (118 aa)) constitute a Response regulatory domain. At Asp56 the chain carries 4-aspartylphosphate. Residues 152–307 (LLSSEKLIAI…QQMLAKISAG (156 aa)) form the CheB-type methylesterase domain. Active-site residues include Ser164, His190, and Asp249.

This sequence belongs to the CheB family. Phosphorylated by CheA. Phosphorylation of the N-terminal regulatory domain activates the methylesterase activity.

It is found in the cytoplasm. It carries out the reaction [protein]-L-glutamate 5-O-methyl ester + H2O = L-glutamyl-[protein] + methanol + H(+). The enzyme catalyses L-glutaminyl-[protein] + H2O = L-glutamyl-[protein] + NH4(+). Involved in chemotaxis. Part of a chemotaxis signal transduction system that modulates chemotaxis in response to various stimuli. Catalyzes the demethylation of specific methylglutamate residues introduced into the chemoreceptors (methyl-accepting chemotaxis proteins or MCP) by CheR. Also mediates the irreversible deamidation of specific glutamine residues to glutamic acid. The protein is Protein-glutamate methylesterase/protein-glutamine glutaminase of Shigella boydii serotype 4 (strain Sb227).